The following is a 183-amino-acid chain: Protein Dr1 (183 aa).

A Histone-fold domain is found at Thr19–Leu82. The segment at Gln92 to Tyr183 is repression of TATA-containing promoters. A disordered region spans residues Ala155 to Tyr183. Residues Glu173–Tyr183 are compositionally biased toward acidic residues.

It belongs to the NC2 beta/DR1 family. Component of the Ada2a-containing (ATAC) complex composed of at least Ada2a, Atac1, Hcf, Ada3, Gcn5, Mocs2B, Charac-14, Atac3, Atac2, NC2beta and wds. Homodimer. Interacts with NC2-alpha/Drap1 to form the dNC2 complex.

The protein localises to the nucleus. Its function is as follows. Bifunctional basic transcription factor. Activates transcription of DPE (Downstream Promoter Element) containing promoters while repressing transcription of promoters which contain TATA elements. Together with Chrac-14, promotes nucleosome sliding of ATP-dependent nucleosome remodeling complexes. This is Protein Dr1 (NC2beta) from Drosophila melanogaster (Fruit fly).